A 110-amino-acid chain; its full sequence is UPF0122 protein Sca_0859 (110 aa).

It belongs to the UPF0122 family.

Its function is as follows. Might take part in the signal recognition particle (SRP) pathway. This is inferred from the conservation of its genetic proximity to ftsY/ffh. May be a regulatory protein. This chain is UPF0122 protein Sca_0859, found in Staphylococcus carnosus (strain TM300).